The primary structure comprises 250 residues: Kallikrein-14 (250 aa).

An N-terminal signal peptide occupies residues 1-18 (MFLLLIILQALAVAIAQS). Residues 19-23 (QGDHK) constitute a propeptide, activation peptide. The Peptidase S1 domain maps to 24–248 (IIGGYRCVRN…YHSWIQRTMQ (225 aa)). The cysteines at positions 51 and 67 are disulfide-linked. Active-site charge relay system residues include histidine 66 and aspartate 110. Disulfide bonds link cysteine 142-cysteine 209, cysteine 174-cysteine 188, and cysteine 199-cysteine 224. Serine 203 serves as the catalytic Charge relay system.

The protein belongs to the peptidase S1 family. Kallikrein subfamily. In terms of processing, proteolytic cleavage of the activation peptide produces the active enzyme.

It is found in the secreted. Its subcellular location is the extracellular space. Its activity is regulated as follows. Inhibited by SERPINA1, SERPINC1, SERPINE1, SERPINF2, aprotinin, soybean, trypsin inhibitor and leupeptin. Inhibited by serine protease inhibitor SPINK5. Has an autoproteolytic activity which may have a regulatory effect. Activated by citrate and inhibited by zinc and to a lower extent by manganese. Functionally, serine-type endopeptidase with a dual trypsin-like and chymotrypsin-like substrate specificity. May activate/inactivate the proteinase-activated receptors F2R, F2RL1 and F2RL3 and other kallikreins including KLK1, KLK3, KLK5 and KLK11. May function in seminal clot liquefaction through direct cleavage of the semenogelin SEMG1 and SEMG2 and activation of KLK3. May function through desmoglein DSG1 cleavage in epidermal desquamation a process by which the most superficial corneocytes are shed from the skin surface. May be involved in several aspects of tumor progression including growth, invasion and angiogenesis. In Mus musculus (Mouse), this protein is Kallikrein-14 (Klk14).